We begin with the raw amino-acid sequence, 225 residues long: Membrane protein (225 aa).

Residues 1–20 are Virion surface-facing; it reads MSNETNCTLDFEQSVELFKE. Residues 21–41 form a helical membrane-spanning segment; sequence YNLFITAFLLFLTIILQYGYA. The Intravirion portion of the chain corresponds to 42 to 51; sequence TRSKFIYILK. Residues 52–72 traverse the membrane as a helical segment; sequence MIVLWCFWPLNIAVGVISCIY. Residues 73–77 lie on the Virion surface side of the membrane; it reads PPNTG. Residues 78–98 form a helical membrane-spanning segment; sequence GLVAAIILTVFACLSFVGYWI. Topologically, residues 99–225 are intravirion; sequence QSIRLFKRCR…VATGGSSLYT (127 aa).

This sequence belongs to the gammacoronaviruses M protein family. Homomultimer. Interacts with envelope E protein in the budding compartment of the host cell, which is located between endoplasmic reticulum and the Golgi complex. Forms a complex with HE and S proteins. Interacts with nucleocapsid N protein. This interaction probably participates in RNA packaging into the virus.

It is found in the virion membrane. The protein resides in the host Golgi apparatus membrane. In terms of biological role, component of the viral envelope that plays a central role in virus morphogenesis and assembly via its interactions with other viral proteins. The protein is Membrane protein of Gallus gallus (Chicken).